Consider the following 420-residue polypeptide: Dual-specificity RNA methyltransferase RlmN (420 aa).

Glu115 serves as the catalytic Proton acceptor. Residues 121 to 388 (DADRGTLCVS…APIRTPRGRD (268 aa)) enclose the Radical SAM core domain. Cys128 and Cys393 are joined by a disulfide. [4Fe-4S] cluster is bound by residues Cys135, Cys139, and Cys142. S-adenosyl-L-methionine contacts are provided by residues 217–218 (GE), Ser249, 271–273 (SLH), and Asn350. The active-site S-methylcysteine intermediate is the Cys393.

Belongs to the radical SAM superfamily. RlmN family. [4Fe-4S] cluster serves as cofactor.

The protein localises to the cytoplasm. The catalysed reaction is adenosine(2503) in 23S rRNA + 2 reduced [2Fe-2S]-[ferredoxin] + 2 S-adenosyl-L-methionine = 2-methyladenosine(2503) in 23S rRNA + 5'-deoxyadenosine + L-methionine + 2 oxidized [2Fe-2S]-[ferredoxin] + S-adenosyl-L-homocysteine. It catalyses the reaction adenosine(37) in tRNA + 2 reduced [2Fe-2S]-[ferredoxin] + 2 S-adenosyl-L-methionine = 2-methyladenosine(37) in tRNA + 5'-deoxyadenosine + L-methionine + 2 oxidized [2Fe-2S]-[ferredoxin] + S-adenosyl-L-homocysteine. Functionally, specifically methylates position 2 of adenine 2503 in 23S rRNA and position 2 of adenine 37 in tRNAs. m2A2503 modification seems to play a crucial role in the proofreading step occurring at the peptidyl transferase center and thus would serve to optimize ribosomal fidelity. The chain is Dual-specificity RNA methyltransferase RlmN from Sphingopyxis alaskensis (strain DSM 13593 / LMG 18877 / RB2256) (Sphingomonas alaskensis).